The primary structure comprises 240 residues: MRDELFTEELKKQFEFDERVAGVFDDMLSRSIPYYALALELSADFALANLPKEGGWVYDLGCSTGSLLLEIERRAGAKNPRLIGIDNSEAMLSRARAKALGYGSRVDFIQGDILDFEYQKSEVILCHYTLQFIRPIHRAYLVQKLYDSLKPEGILIFSEKVVSEDRVLDHQMIERYYAYKREQGYSEVEIVKKREALENVLIPYTAKENEKMLLEAGFAHVETLFRWVNFATFIAKKGEA.

Residues Y35, 61–63, 86–87, 112–113, and R194 contribute to the S-adenosyl-L-methionine site; these read GCS, DN, and DI.

The protein belongs to the class I-like SAM-binding methyltransferase superfamily. Cx-SAM synthase family. Homodimer.

It carries out the reaction prephenate + S-adenosyl-L-methionine = carboxy-S-adenosyl-L-methionine + 3-phenylpyruvate + H2O. Functionally, catalyzes the conversion of S-adenosyl-L-methionine (SAM) to carboxy-S-adenosyl-L-methionine (Cx-SAM). The polypeptide is Carboxy-S-adenosyl-L-methionine synthase (Wolinella succinogenes (strain ATCC 29543 / DSM 1740 / CCUG 13145 / JCM 31913 / LMG 7466 / NCTC 11488 / FDC 602W) (Vibrio succinogenes)).